Consider the following 736-residue polypeptide: Gingipain R2 (736 aa).

The N-terminal stretch at 1 to 24 (MKKNFSRIVSIVAFSSLLGGMAFA) is a signal peptide. A propeptide spanning residues 25–229 (QPAERGRNPQ…SVFMNYEATR (205 aa)) is cleaved from the precursor. 7 residues coordinate Ca(2+): Asp-307, Val-329, Asp-332, Tyr-334, Glu-336, Glu-390, and His-395. Catalysis depends on His-440, which acts as the Proton donor. The active-site Nucleophile is the Cys-473. The Ca(2+) site is built by Phe-478, Glu-487, Asp-521, Glu-522, Glu-525, His-531, Asp-613, and Glu-639.

The protein belongs to the peptidase C25 family.

The protein localises to the secreted. It carries out the reaction Hydrolysis of proteins and small molecule substrates, with a preference for Arg in P1.. With respect to regulation, inhibited by human histatin-3 1/24 (histatin-5). Thiol protease. Acts synergistically with RgpA to catalyze the maturation of fimbrial subunits, such as FimA. Its proteolytic activity is a major factor in both periodontal tissue destruction and in evasion of host defense mechanisms. In Porphyromonas gingivalis (strain ATCC BAA-308 / W83), this protein is Gingipain R2 (rgpB).